The primary structure comprises 458 residues: tRNA modification GTPase MnmE (458 aa).

The (6S)-5-formyl-5,6,7,8-tetrahydrofolate site is built by Arg-22, Glu-85, and Arg-124. Positions 220–379 (GLATAIIGRP…LEEAISRLFF (160 aa)) constitute a TrmE-type G domain. Asn-230 contributes to the K(+) binding site. GTP contacts are provided by residues 230 to 235 (NVGKSS), 249 to 255 (TDIPGTT), and 274 to 277 (DTAG). Ser-234 is a Mg(2+) binding site. K(+) is bound by residues Thr-249, Ile-251, and Thr-254. Thr-255 contacts Mg(2+). Residue Lys-458 coordinates (6S)-5-formyl-5,6,7,8-tetrahydrofolate.

It belongs to the TRAFAC class TrmE-Era-EngA-EngB-Septin-like GTPase superfamily. TrmE GTPase family. As to quaternary structure, homodimer. Heterotetramer of two MnmE and two MnmG subunits. The cofactor is K(+).

Its subcellular location is the cytoplasm. Its function is as follows. Exhibits a very high intrinsic GTPase hydrolysis rate. Involved in the addition of a carboxymethylaminomethyl (cmnm) group at the wobble position (U34) of certain tRNAs, forming tRNA-cmnm(5)s(2)U34. This chain is tRNA modification GTPase MnmE, found in Shouchella clausii (strain KSM-K16) (Alkalihalobacillus clausii).